A 576-amino-acid chain; its full sequence is Lysine--tRNA ligase, mitochondrial (576 aa).

A mitochondrion-targeting transit peptide spans 1-30 (MNVLLKRRSLTFAPRWLWCKCRSSRSRPYS).

Belongs to the class-II aminoacyl-tRNA synthetase family.

It localises to the mitochondrion matrix. The catalysed reaction is tRNA(Lys) + L-lysine + ATP = L-lysyl-tRNA(Lys) + AMP + diphosphate. In terms of biological role, catalyzes the attachment of lysine to tRNA(Lys) in the mitochondrion. The chain is Lysine--tRNA ligase, mitochondrial (MSK1) from Saccharomyces cerevisiae (strain ATCC 204508 / S288c) (Baker's yeast).